Reading from the N-terminus, the 115-residue chain is Large ribosomal subunit protein uL24 (115 aa).

The protein belongs to the universal ribosomal protein uL24 family. In terms of assembly, part of the 50S ribosomal subunit.

Functionally, one of two assembly initiator proteins, it binds directly to the 5'-end of the 23S rRNA, where it nucleates assembly of the 50S subunit. In terms of biological role, one of the proteins that surrounds the polypeptide exit tunnel on the outside of the subunit. This Aster yellows witches'-broom phytoplasma (strain AYWB) protein is Large ribosomal subunit protein uL24.